A 321-amino-acid chain; its full sequence is GTP cyclohydrolase FolE2 (321 aa).

This sequence belongs to the GTP cyclohydrolase IV family.

It catalyses the reaction GTP + H2O = 7,8-dihydroneopterin 3'-triphosphate + formate + H(+). It participates in cofactor biosynthesis; 7,8-dihydroneopterin triphosphate biosynthesis; 7,8-dihydroneopterin triphosphate from GTP: step 1/1. Its function is as follows. Converts GTP to 7,8-dihydroneopterin triphosphate. In Paracoccus denitrificans (strain Pd 1222), this protein is GTP cyclohydrolase FolE2.